The following is a 410-amino-acid chain: Phosphoglycerate kinase (410 aa).

Substrate-binding positions include 19 to 21 (DLN), R34, 57 to 60 (HQGK), R114, and R154. ATP-binding positions include E332 and 358 to 361 (GGHS).

Belongs to the phosphoglycerate kinase family. In terms of assembly, homodimer.

The protein localises to the cytoplasm. The catalysed reaction is (2R)-3-phosphoglycerate + ATP = (2R)-3-phospho-glyceroyl phosphate + ADP. It participates in carbohydrate degradation; glycolysis; pyruvate from D-glyceraldehyde 3-phosphate: step 2/5. This is Phosphoglycerate kinase (pgk) from Pyrococcus horikoshii (strain ATCC 700860 / DSM 12428 / JCM 9974 / NBRC 100139 / OT-3).